The sequence spans 133 residues: Small ribosomal subunit protein uS11 (133 aa).

Belongs to the universal ribosomal protein uS11 family. Part of the 30S ribosomal subunit. Interacts with proteins S7 and S18. Binds to IF-3.

Located on the platform of the 30S subunit, it bridges several disparate RNA helices of the 16S rRNA. Forms part of the Shine-Dalgarno cleft in the 70S ribosome. This is Small ribosomal subunit protein uS11 from Cupriavidus metallidurans (strain ATCC 43123 / DSM 2839 / NBRC 102507 / CH34) (Ralstonia metallidurans).